The sequence spans 387 residues: Postreplication repair E3 ubiquitin-protein ligase rad18 (387 aa).

The RING-type zinc finger occupies 29-67 (CLICHEYFRAPLITSCSHTFCSFCIRDYLREHPMCPACR). Residues 119–153 (DSASGDEEWEDDLASNSSPASIAKKTSRDSKKRKR) are disordered. Residues 122–131 (SGDEEWEDDL) are compositionally biased toward acidic residues. The segment at 156–183 (LVHCPACSNLVPHNQINQHLDSCLNSPS) adopts a UBZ4-type zinc-finger fold. The Zn(2+) site is built by cysteine 159, cysteine 162, histidine 174, and cysteine 178. The disordered stretch occupies residues 174 to 206 (HLDSCLNSPSSPSSSSSPYKNKDNSKSNSLLSF). A compositionally biased stretch (low complexity) spans 177–192 (SCLNSPSSPSSSSSPY). One can recognise an SAP domain in the interval 240–274 (YALLSESKIRSKLSEMGLPTDGHKQLLQRRHAKWV). The segment at 335–387 (KQSTTNKNDSLRNTAVESSTEPSTSNGFPATSVSPPLTIDLTNSQTGSDGPQS) is disordered.

This sequence belongs to the RAD18 family. In terms of assembly, interacts with E2 ubc2, forming a complex with ubiquitin ligase activity.

Its subcellular location is the nucleus. It catalyses the reaction S-ubiquitinyl-[E2 ubiquitin-conjugating enzyme]-L-cysteine + [acceptor protein]-L-lysine = [E2 ubiquitin-conjugating enzyme]-L-cysteine + N(6)-ubiquitinyl-[acceptor protein]-L-lysine.. It functions in the pathway protein modification; protein ubiquitination. Its function is as follows. E3 RING-finger protein, member of the UBC2/RAD6 epistasis group. Associates to the E2 ubiquitin conjugating enzyme ubc2/rad6 to form the ubc2-rad18 ubiquitin ligase complex involved in postreplicative repair (PRR) of damaged DNA. This chain is Postreplication repair E3 ubiquitin-protein ligase rad18 (rhp18), found in Schizosaccharomyces pombe (strain 972 / ATCC 24843) (Fission yeast).